A 149-amino-acid polypeptide reads, in one-letter code: Large ribosomal subunit protein uL11 (149 aa).

Belongs to the universal ribosomal protein uL11 family. As to quaternary structure, part of the ribosomal stalk of the 50S ribosomal subunit. Interacts with L10 and the large rRNA to form the base of the stalk. L10 forms an elongated spine to which L12 dimers bind in a sequential fashion forming a multimeric L10(L12)X complex. In terms of processing, one or more lysine residues are methylated.

In terms of biological role, forms part of the ribosomal stalk which helps the ribosome interact with GTP-bound translation factors. The protein is Large ribosomal subunit protein uL11 of Methylorubrum extorquens (strain CM4 / NCIMB 13688) (Methylobacterium extorquens).